The following is a 261-amino-acid chain: Chitinase 8 (261 aa).

A signal peptide spans Met-1–Ala-29. Cystine bridges form between Cys-53–Cys-115 and Cys-221–Cys-253. Residue Glu-98 is the Proton donor of the active site.

The protein belongs to the glycosyl hydrolase 19 family. Chitinase class II subfamily. In terms of tissue distribution, expressed in roots, leaves, sheaths and meristems.

It catalyses the reaction Random endo-hydrolysis of N-acetyl-beta-D-glucosaminide (1-&gt;4)-beta-linkages in chitin and chitodextrins.. The sequence is that of Chitinase 8 (Cht8) from Oryza sativa subsp. japonica (Rice).